A 47-amino-acid polypeptide reads, in one-letter code: Lysis protein for colicin E5 (47 aa).

The first 19 residues, 1–19 (MKKITWIILLLLAAIILAA), serve as a signal peptide directing secretion. A lipid anchor (N-palmitoyl cysteine) is attached at C20. The S-diacylglycerol cysteine moiety is linked to residue C20.

The protein localises to the cell outer membrane. Lysis proteins are required for both colicin release and partial cell lysis. The protein is Lysis protein for colicin E5 (lys) of Escherichia coli.